A 183-amino-acid chain; its full sequence is Hypoxanthine-guanine-xanthine phosphoribosyltransferase (183 aa).

Residues 102 to 110, Lys134, and Asp163 each bind GMP; that span reads EDIIDTGLT. The active-site Proton acceptor is Asp106. Asp163 provides a ligand contact to Mg(2+).

In terms of assembly, homodimer. Mg(2+) is required as a cofactor.

Its subcellular location is the cytoplasm. It catalyses the reaction IMP + diphosphate = hypoxanthine + 5-phospho-alpha-D-ribose 1-diphosphate. It carries out the reaction GMP + diphosphate = guanine + 5-phospho-alpha-D-ribose 1-diphosphate. The catalysed reaction is XMP + diphosphate = xanthine + 5-phospho-alpha-D-ribose 1-diphosphate. It functions in the pathway purine metabolism; GMP biosynthesis via salvage pathway; GMP from guanine: step 1/1. The protein operates within purine metabolism; IMP biosynthesis via salvage pathway; IMP from hypoxanthine: step 1/1. It participates in purine metabolism; XMP biosynthesis via salvage pathway; XMP from xanthine: step 1/1. Essential in nucleic acid metabolism of T.foetus because the parasite is unable to synthesize purine nucleotides de novo and relies on the HGXPRTase activities for its purine requirements by salvaging purine bases from the host. Works with guanine, hypoxanthine and xanthine. The protein is Hypoxanthine-guanine-xanthine phosphoribosyltransferase (HPT) of Tritrichomonas foetus (Trichomonas foetus).